Here is a 403-residue protein sequence, read N- to C-terminus: MEFDRMLIRYGELSTKGKNRKQFVTKLAQNVKRAMTDLPEVRIHGERDRMYIILNGADYQLVEERLKPIFGIQSFSPAVRVNLDVEEVKAAALALVQDAHEENGTFKVAARRSHREFPLDSNEINQEIGAYVLQNMEDLTVNVKNPDVKLTIDVRKEGVFLSCRTILGAAGLPVGSSGRAMLMLSGGIDSPVAGYLAQKRGVEIEAVHFHSPPYTSEQAKQKAVDLAAKLAKYSGQVQMHIVPFTEIQEVIKQQIPESVIMTVTRRMMLRITDELRRRRNGLAIVNGESLGQVASQTLESMLAINAVTATPIIRPVVSMDKNEIIQIAQKIDTYNLSVQPFEDCCTIFTPPSPKTKPKLDKIEHYESFTDFEALIAKALDNIETISVNVAETAQVKDEFADLF.

The THUMP domain occupies 60–165 (QLVEERLKPI…KEGVFLSCRT (106 aa)). Residues 183–184 (ML), 208–209 (HF), R265, G287, and Q296 each bind ATP.

It belongs to the ThiI family.

It is found in the cytoplasm. The catalysed reaction is [ThiI sulfur-carrier protein]-S-sulfanyl-L-cysteine + a uridine in tRNA + 2 reduced [2Fe-2S]-[ferredoxin] + ATP + H(+) = [ThiI sulfur-carrier protein]-L-cysteine + a 4-thiouridine in tRNA + 2 oxidized [2Fe-2S]-[ferredoxin] + AMP + diphosphate. The enzyme catalyses [ThiS sulfur-carrier protein]-C-terminal Gly-Gly-AMP + S-sulfanyl-L-cysteinyl-[cysteine desulfurase] + AH2 = [ThiS sulfur-carrier protein]-C-terminal-Gly-aminoethanethioate + L-cysteinyl-[cysteine desulfurase] + A + AMP + 2 H(+). It participates in cofactor biosynthesis; thiamine diphosphate biosynthesis. Catalyzes the ATP-dependent transfer of a sulfur to tRNA to produce 4-thiouridine in position 8 of tRNAs, which functions as a near-UV photosensor. Also catalyzes the transfer of sulfur to the sulfur carrier protein ThiS, forming ThiS-thiocarboxylate. This is a step in the synthesis of thiazole, in the thiamine biosynthesis pathway. The sulfur is donated as persulfide by IscS. This Listeria monocytogenes serotype 4b (strain CLIP80459) protein is Probable tRNA sulfurtransferase.